A 178-amino-acid polypeptide reads, in one-letter code: Co-chaperone protein p23-1 (178 aa).

The CS domain occupies Ser-2–Thr-91. Acidic residues-rich tracts occupy residues Asp-112–Asp-126 and Asp-136–Thr-155. The disordered stretch occupies residues Asp-112–Asp-178. A compositionally biased stretch (basic and acidic residues) spans Ala-157–Asp-178.

It belongs to the p23/wos2 family. Interacts with HSP90 in an ATP-dependent manner.

In terms of biological role, acts as a co-chaperone for HSP90. The chain is Co-chaperone protein p23-1 from Brassica napus (Rape).